The sequence spans 337 residues: Membrane-spanning 4-domains subfamily A member 18 (337 aa).

A disordered region spans residues 101-121 (LGTTDLQTQPGGPQNPPTCAP). A run of 4 helical transmembrane segments spans residues 155 to 175 (LGAI…NPSL), 183 to 203 (AISG…SLSV), 220 to 240 (MNVV…VDLI), and 252 to 272 (GGLL…SHFG).

The protein belongs to the MS4A family.

It localises to the membrane. The chain is Membrane-spanning 4-domains subfamily A member 18 (MS4A18) from Bos taurus (Bovine).